The sequence spans 122 residues: MQWWNMKTSSRKCLKSMKGKFSQKNTGTATVFKPKTPSFRCFLTNRQKMTPYFGLPLKPDWSSPTQRPIGKSTLKRGQWEKCCLNHTSGPCTCQRCPFPLRRIFGTRACMRCKRPTCPSLKT.

This is an uncharacterized protein from Carica papaya (Papaya).